We begin with the raw amino-acid sequence, 889 residues long: Oxysterol-binding protein-related protein 8 (889 aa).

Position 1 is an N-acetylmethionine (M1). Residues 1–129 (MEAALADGEP…SLKVQKKNYR (129 aa)) form a disordered region. Residues S14, S65, and S68 each carry the phosphoserine modification. Residues 62-71 (PSLSPASLHS) show a composition bias toward polar residues. Basic and acidic residues-rich tracts occupy residues 73–88 (GFER…KDDS), 95–109 (SKSE…EKDS), and 116–129 (TKKE…KNYR). Residues 148–265 (VIVMADWLKI…WMDALELALK (118 aa)) form the PH domain. Phosphoserine is present on residues S314, S328, and S342. A compositionally biased stretch (basic and acidic residues) spans 321–336 (FKDQDLYSDKSDKEND). Residues 321 to 374 (FKDQDLYSDKSDKENDPEHDESDNEVLGKSEESDTDTSERQDDSYIDPEPVEPL) are disordered. Residues 346-363 (VLGKSEESDTDTSERQDD) show a composition bias toward basic and acidic residues. A 1,2-diacyl-sn-glycero-3-phospho-(1D-myo-inositol 4-phosphate) is bound by residues 420–425 (LSRVVL), 482–485 (KPYN), and 514–515 (HH). A 1,2-diacyl-sn-glycero-3-phospho-L-serine-binding positions include 420 to 425 (LSRVVL) and N485. Position 540 (S540) interacts with a 1,2-diacyl-sn-glycero-3-phospho-L-serine. Residues K706, E710, and R714 each coordinate a 1,2-diacyl-sn-glycero-3-phospho-(1D-myo-inositol 4-phosphate). The interval 772-823 (HRTPMVSVPKMKHKPTRQQKKVVKGYSSPEPDIQDSSGSEAQSVKPSTRRKK) is disordered. The segment covering 781-794 (KMKHKPTRQQKKVV) has biased composition (basic residues). Residues 805–817 (QDSSGSEAQSVKP) show a composition bias toward polar residues. 4 positions are modified to phosphoserine: S807, S808, S810, and S814. The chain crosses the membrane as a helical span at residues 871 to 888 (YFVIFLLILLQVIINFIF).

This sequence belongs to the OSBP family. In terms of assembly, interacts with SPAG5. Interacts with NUP62. Widely expressed. Most abundant in liver, spleen, kidney, brain and adipose tissue.

The protein resides in the endoplasmic reticulum membrane. It localises to the nucleus membrane. Lipid transporter involved in lipid countertransport between the endoplasmic reticulum and the plasma membrane: specifically exchanges phosphatidylserine with phosphatidylinositol 4-phosphate (PI4P), delivering phosphatidylserine to the plasma membrane in exchange for PI4P, which is degraded by the SAC1/SACM1L phosphatase in the endoplasmic reticulum. Binds phosphatidylserine and PI4P in a mutually exclusive manner. Binds oxysterol, 25-hydroxycholesterol and cholesterol. This is Oxysterol-binding protein-related protein 8 from Mus musculus (Mouse).